Reading from the N-terminus, the 254-residue chain is Pimeloyl-[acyl-carrier protein] methyl ester esterase (254 aa).

The 229-residue stretch at 14 to 242 (LVLLHGWGMN…ASHAPFISHP (229 aa)) folds into the AB hydrolase-1 domain. Residues W20, 82–83 (SL), and 143–147 (FLAIQ) contribute to the substrate site. S82 functions as the Nucleophile in the catalytic mechanism. Residues D207 and H235 contribute to the active site. Residue H235 participates in substrate binding.

It belongs to the AB hydrolase superfamily. Carboxylesterase BioH family. Monomer.

It is found in the cytoplasm. The catalysed reaction is 6-carboxyhexanoyl-[ACP] methyl ester + H2O = 6-carboxyhexanoyl-[ACP] + methanol + H(+). Its pathway is cofactor biosynthesis; biotin biosynthesis. Its function is as follows. The physiological role of BioH is to remove the methyl group introduced by BioC when the pimeloyl moiety is complete. It allows to synthesize pimeloyl-ACP via the fatty acid synthetic pathway through the hydrolysis of the ester bonds of pimeloyl-ACP esters. The sequence is that of Pimeloyl-[acyl-carrier protein] methyl ester esterase from Aeromonas hydrophila subsp. hydrophila (strain ATCC 7966 / DSM 30187 / BCRC 13018 / CCUG 14551 / JCM 1027 / KCTC 2358 / NCIMB 9240 / NCTC 8049).